The sequence spans 189 residues: MLSDFFNNLASFFSNIFSLFEGKKQTRILMIGLDGAGKSTLLYKLKLGDIVSTVPTIGFNVETIEYKNLSMTVWDVGGQYKIRALWKHYYHGTNAIIFVVDSTDRERMDEVKEEIDTLLIQEELKGIQILIFANKQDMNNAMNTSEIVDSLNLNSIKDRKWYVQPCSAIKSPHGIYEGFDWVANSLNNK.

Residues 34-40 (DGAGKST), 75-79 (DVGGQ), and 134-137 (NKQD) contribute to the GTP site.

It belongs to the small GTPase superfamily. Arf family.

The protein localises to the golgi apparatus. Functionally, GTP-binding protein that may be involved in protein trafficking. May modulate vesicle budding and uncoating within the Golgi apparatus. The chain is ADP-ribosylation factor H (arrH) from Dictyostelium discoideum (Social amoeba).